Here is a 347-residue protein sequence, read N- to C-terminus: Protein pelota homolog (347 aa).

This sequence belongs to the eukaryotic release factor 1 family. Pelota subfamily. Monomer. It depends on a divalent metal cation as a cofactor.

The protein resides in the cytoplasm. May function in recognizing stalled ribosomes, interact with stem-loop structures in stalled mRNA molecules, and effect endonucleolytic cleavage of the mRNA. May play a role in the release non-functional ribosomes and degradation of damaged mRNAs. Has endoribonuclease activity. This Methanocaldococcus jannaschii (strain ATCC 43067 / DSM 2661 / JAL-1 / JCM 10045 / NBRC 100440) (Methanococcus jannaschii) protein is Protein pelota homolog.